A 231-amino-acid polypeptide reads, in one-letter code: Augmin complex subunit dgt2 (231 aa).

A coiled-coil region spans residues 128-199; it reads QEADLSCDQK…VQTKAELLRG (72 aa).

As to quaternary structure, component of the augmin complex composed of dgt2, dgt3, dgt4, dgt5, dgt6, msd1, msd5 and wac. The complex interacts directly or indirectly with microtubules and is required for centrosome-independent generation of spindle microtubules. dgt2 interacts directly with wac (via coiled coil). In adult females, detected only in the abdomen with no expression in the head or thorax (at protein level).

The protein resides in the cytoplasm. The protein localises to the cytoskeleton. It localises to the spindle. It is found in the spindle pole. In terms of biological role, as part of the augmin complex, plays a role in centrosome-independent generation of spindle microtubules. The complex is required for mitotic spindle assembly through its involvement in localizing gamma-tubulin to spindle microtubules. dgt2 binds to microtubules in vitro. The chain is Augmin complex subunit dgt2 from Drosophila melanogaster (Fruit fly).